The chain runs to 528 residues: Catalase (528 aa).

A compositionally biased stretch (basic and acidic residues) spans 1 to 22 (MADRREKSADQMKLWKESRANQ). The segment at 1–32 (MADRREKSADQMKLWKESRANQKPDVLTTGGG) is disordered. Residues His-75 and Asn-148 contribute to the active site. Positions 194, 201, 203, 213, 237, 303, 305, and 306 each coordinate NADP(+). Residue Tyr-358 participates in heme binding. A Microbody targeting signal; atypical motif is present at residues 525–528 (KANL).

Belongs to the catalase family. As to quaternary structure, homotetramer. Heme serves as cofactor. The cofactor is NADP(+).

The protein resides in the peroxisome matrix. The catalysed reaction is 2 H2O2 = O2 + 2 H2O. Catalyzes the degradation of hydrogen peroxide (H(2)O(2)) generated by peroxisomal oxidases to water and oxygen, thereby protecting cells from the toxic effects of hydrogen peroxide. In Glandirana rugosa (Japanese wrinkled frog), this protein is Catalase (cat).